The chain runs to 387 residues: Apoptosis-inducing factor homolog B (387 aa).

Residues 12–16 (GGGYG), Arg47, and Asp292 each bind FAD.

This sequence belongs to the FAD-dependent oxidoreductase family. FAD is required as a cofactor.

Putative FAD-dependent oxidoreductase. This is Apoptosis-inducing factor homolog B (aifB) from Dictyostelium discoideum (Social amoeba).